A 184-amino-acid chain; its full sequence is Nucleoside triphosphate pyrophosphatase (184 aa).

The active-site Proton acceptor is the aspartate 71.

Belongs to the Maf family. The cofactor is a divalent metal cation.

Its subcellular location is the cytoplasm. The enzyme catalyses a ribonucleoside 5'-triphosphate + H2O = a ribonucleoside 5'-phosphate + diphosphate + H(+). It catalyses the reaction a 2'-deoxyribonucleoside 5'-triphosphate + H2O = a 2'-deoxyribonucleoside 5'-phosphate + diphosphate + H(+). In terms of biological role, nucleoside triphosphate pyrophosphatase. May have a dual role in cell division arrest and in preventing the incorporation of modified nucleotides into cellular nucleic acids. In Synechococcus sp. (strain CC9605), this protein is Nucleoside triphosphate pyrophosphatase.